The primary structure comprises 254 residues: 3-dehydroquinate dehydratase (254 aa).

3-dehydroquinate-binding positions include 47–49 and Arg-83; that span reads EFR. His-144 (proton donor/acceptor) is an active-site residue. The Schiff-base intermediate with substrate role is filled by Lys-171. Arg-213, Ser-232, and Gln-236 together coordinate 3-dehydroquinate.

This sequence belongs to the type-I 3-dehydroquinase family. Homodimer.

The enzyme catalyses 3-dehydroquinate = 3-dehydroshikimate + H2O. Its pathway is metabolic intermediate biosynthesis; chorismate biosynthesis; chorismate from D-erythrose 4-phosphate and phosphoenolpyruvate: step 3/7. Its function is as follows. Involved in the third step of the chorismate pathway, which leads to the biosynthesis of aromatic amino acids. Catalyzes the cis-dehydration of 3-dehydroquinate (DHQ) and introduces the first double bond of the aromatic ring to yield 3-dehydroshikimate. The sequence is that of 3-dehydroquinate dehydratase from Neisseria meningitidis serogroup B (strain ATCC BAA-335 / MC58).